The following is a 61-amino-acid chain: [Thr6, Val10, Asp11]-phyllokinin (61 aa).

A signal peptide spans 1–22 (MSFLKKSLFLVLFLGLVSFSIC). The propeptide occupies 23 to 50 (EEEKRETEEEENEDEMNEESEEKRESPE). Residues 24–61 (EEKRETEEEENEDEMNEESEEKRESPERPPGFTPFRVD) are disordered. Positions 30–42 (EEEENEDEMNEES) are enriched in acidic residues.

The protein belongs to the frog skin active peptide (FSAP) family. Bradykinin-related peptide subfamily. Expressed by the skin glands.

It localises to the secreted. Functionally, induces relaxation of rat smooth muscle from tail artery and contraction of that from ileum, urinary bladder and uterus. Binds to both bradykinin receptor B1 (BDKRB1) and B2 (BDKRB2). This Agalychnis spurrelli (Gliding leaf frog) protein is [Thr6, Val10, Asp11]-phyllokinin.